Reading from the N-terminus, the 161-residue chain is Small ribosomal subunit protein uS9 (161 aa).

The segment at 1 to 38 (MAQTITSLADLKQGPGAEPAGLSAEPQEPKLDKEGRAY) is disordered. The span at 27–38 (QEPKLDKEGRAY) shows a compositional bias: basic and acidic residues.

The protein belongs to the universal ribosomal protein uS9 family.

This Rhodospirillum centenum (strain ATCC 51521 / SW) protein is Small ribosomal subunit protein uS9.